The chain runs to 506 residues: Zinc finger protein 157 (506 aa).

Residues 27–98 (VSFEDVAVDF…EEESSGHGYS (72 aa)) enclose the KRAB domain. 12 C2H2-type zinc fingers span residues 162-184 (FECHECGKAYCRKSNLVEHLRIH), 190-212 (YECGECAKTFSARSYLIAHQKTH), 218-240 (FECNECGKSFGRKSQLILHTRTH), 246-268 (YECTECGKTFSEKATLTIHQRTH), 274-296 (YECSECGKTFRVKISLTQHHRTH), 302-324 (YECGECGKNFRAKKSLNQHQRIH), 330-352 (YECGECGKFFRMKMTLNNHQRTH), 358-380 (YQCNECGKSFRVHSSLGIHQRIH), 386-408 (YECNECGNAFYVKARLIEHQRMH), 414-436 (YECSECGKIFSMKKSLCQHRRTH), 442-464 (YECSECGNAFYVKVRLIEHQRIH), and 470-492 (FECQECGKAFCRKAHLTEHQRTH).

It belongs to the krueppel C2H2-type zinc-finger protein family.

The protein resides in the nucleus. May be involved in transcriptional regulation. The sequence is that of Zinc finger protein 157 (ZNF157) from Homo sapiens (Human).